Reading from the N-terminus, the 55-residue chain is U17-myrmicitoxin-Mri1b (55 aa).

A signal peptide spans 1–31 (MENSRTSTFTAYVTVAFLLISTFVTMVVTES). Glutamine 32 is subject to Pyrrolidone carboxylic acid.

In terms of processing, contains 1 disulfide bond. As to expression, expressed by the venom gland.

It localises to the secreted. In Manica rubida (European giant red ant), this protein is U17-myrmicitoxin-Mri1b.